The following is a 144-amino-acid chain: Mannitol-specific phosphotransferase enzyme IIA component (144 aa).

The region spanning 3 to 142 is the PTS EIIA type-2 domain; the sequence is ELFSNDNIFL…EEIKQVFEEA (140 aa). The active-site Tele-phosphohistidine intermediate is His-63. His-63 carries the post-translational modification Phosphohistidine; by HPr.

Homodimer or homotrimer. Seems to be a monomer when not phosphorylated.

It is found in the cytoplasm. In terms of biological role, the phosphoenolpyruvate-dependent sugar phosphotransferase system (sugar PTS), a major carbohydrate active transport system, catalyzes the phosphorylation of incoming sugar substrates concomitantly with their translocation across the cell membrane. The enzyme II CmtAB PTS system is involved in D-mannitol transport. This Staphylococcus aureus (strain MRSA252) protein is Mannitol-specific phosphotransferase enzyme IIA component (mtlF).